The sequence spans 507 residues: MDEDNLETALQTYRAQLQQVELALGAGLDASEQADLRQLQGDLKELIELTEASLLSVRKSKLLSTVDQEHQEDAEYLAFQKAIAEEAPVDPGNDSKTVPGSEVQPTPTSSALEEEEEDPDLEDLSGAKVNAPYYSAWGTLEYHNAMVVGAEEAEDGSACVRVLYLYPTHKSLKPCPFFLEGKCRFKENCRFSHGQLVSVDELRPFQDPDLSLLQTGSACLAKHQDGLWHPARITDVDNGYYTVKFDSLLLKEAVVEGDSILPPLRTEATDSSDSDTGDASDSSYARVVEANTVDTGTCSSAFAGWEVHTRGIGSKLLVKMGYEFGKGLGRHAEGRVEPIHAVVLPRGKSLDQCAEILQKKTKQGQTGASRPPRCRRRSSRPEGRPPPRNVFDFLNEKLQSQVPGTPDAGVDTPERRNKDMYHASKSAKQALSLQLFQTEEKIERTQRDIRGIQEALTRNTGRHGMATAHLQEKLEGAQRQLGQLRAQEADLQRKQRKADTHRKMTEF.

M1 is subject to N-acetylmethionine. Residues P88–S125 form a disordered region. Positions D94–A111 are enriched in polar residues. A compositionally biased stretch (acidic residues) spans L112–D123. The C3H1-type zinc finger occupies K170 to L196. Residues L264 to S283 form a disordered region. Phosphoserine is present on S272. Position 276 is a phosphothreonine (T276). Residues T309–E355 form the G-patch domain. At S349 the chain carries Phosphoserine. 2 disordered regions span residues K359–N389 and A486–F507. Over residues Q487–F507 the composition is skewed to basic and acidic residues.

Interacts with CHD4/Mi-2; the interaction is direct.

It is found in the nucleus. Functionally, transcription repressor that specifically binds the 5'-GGAG[GA]A[GA]A-3' consensus sequence. Represses transcription by recruiting the chromatin multiprotein complex NuRD to target promoters. Negatively regulates expression of EGFR, a gene involved in cell proliferation, survival and migration. Its ability to repress genes of the EGFR pathway suggest it may act as a tumor suppressor. This Rattus norvegicus (Rat) protein is Zinc finger CCCH-type with G patch domain-containing protein (Zgpat).